The chain runs to 498 residues: E3 ubiquitin-protein ligase TRIM22 (498 aa).

Residues 15 to 60 (CPICLELLTEPLSLDCGHSFCQACITAKIKESVIISRGESSCPVCQ) form an RING-type zinc finger. The B box-type zinc finger occupies 92-133 (QKRDVCEHHGKKLQIFCKEDGKVICWVCELSQEHQGHQTFRI). C97, H100, C119, and H125 together coordinate Zn(2+). The stretch at 132-248 (RINEVVKECQ…RRLRGSSVEM (117 aa)) forms a coiled coil. The Nuclear localization signal motif lies at 257-275 (KRSESWTLKKPKSVSKKLK). The B30.2/SPRY domain maps to 283–498 (LSGMLQVLKE…VPMTVCPPSS (216 aa)).

It belongs to the TRIM/RBCC family. Homotrimer. In terms of assembly, (Microbial infection) Interacts with HIV-1 Gag polyprotein; this interaction seems to reduce gag production or virus budding. As to quaternary structure, (Microbial infection) Interacts with EMCV protease 3C; this interaction leads to viral protease ubiquitination. Auto-ubiquitinated. Strongly expressed in peripheral blood leukocytes, spleen, thymus, and ovary. Expressed at basal levels in other tissues.

The protein resides in the cytoplasm. It localises to the nucleus. It is found in the nucleus speckle. Its subcellular location is the cajal body. The catalysed reaction is S-ubiquitinyl-[E2 ubiquitin-conjugating enzyme]-L-cysteine + [acceptor protein]-L-lysine = [E2 ubiquitin-conjugating enzyme]-L-cysteine + N(6)-ubiquitinyl-[acceptor protein]-L-lysine.. Its pathway is protein modification; protein ubiquitination. Interferon-induced E3 ubiquitin ligase that plays important roles in innate and adaptive immunity. Restricts the replication of many viruses including HIV-1, encephalomyocarditis virus (EMCV), hepatitis B virus (HBV), hepatitis C virus (HCV) or Zika virus (ZIKV). Mechanistically, negatively regulates HCV replication by promoting ubiquitination and subsequent degradation of viral NS5A. Also acts by promoting the degradation of Zika virus NS1 and NS3 proteins through proteasomal degradation. Acts as a suppressor of basal HIV-1 LTR-driven transcription by preventing Sp1 binding to the HIV-1 promoter. Also plays a role in antiviral immunity by co-regulating together with NT5C2 the RIGI/NF-kappa-B pathway by promoting 'Lys-63'-linked ubiquitination of RIGI, while NT5C2 is responsible for 'Lys-48'-linked ubiquitination of RIGI. Participates in adaptive immunity by suppressing the amount of MHC class II protein in a negative feedback manner in order to limit the extent of MHC class II induction. The polypeptide is E3 ubiquitin-protein ligase TRIM22 (TRIM22) (Homo sapiens (Human)).